The primary structure comprises 499 residues: tRNA (guanine(37)-N(1))-methyltransferase (499 aa).

Residues 1–44 constitute a mitochondrion transit peptide; the sequence is MKIALPVFQKFNRLISSCKMSGVFPYNPPVNRQMRELDRSFFIT. S-adenosyl-L-methionine contacts are provided by residues histidine 268, 307 to 308, 335 to 336, and asparagine 399; these read DL and DG.

The protein belongs to the class I-like SAM-binding methyltransferase superfamily. TRM5/TYW2 family. As to quaternary structure, monomer.

It localises to the mitochondrion matrix. The protein localises to the nucleus. The protein resides in the cytoplasm. The enzyme catalyses guanosine(37) in tRNA + S-adenosyl-L-methionine = N(1)-methylguanosine(37) in tRNA + S-adenosyl-L-homocysteine + H(+). Specifically methylates the N1 position of guanosine-37 in various cytoplasmic and mitochondrial tRNAs. Methylation is not dependent on the nature of the nucleoside 5' of the target nucleoside. This is the first step in the biosynthesis of wybutosine (yW), a modified base adjacent to the anticodon of tRNAs and required for accurate decoding. Postspliced cytoplasmic tRNAs are imported into the nucleus, where this first step seems to take place, after which they are reexported to the cytoplasm, where the yW sythesis is completed by cytoplasmic enzymes. The polypeptide is tRNA (guanine(37)-N(1))-methyltransferase (Saccharomyces cerevisiae (strain ATCC 204508 / S288c) (Baker's yeast)).